A 612-amino-acid polypeptide reads, in one-letter code: Probable Xaa-Pro aminopeptidase P (612 aa).

Positions 409, 420, 518, and 532 each coordinate Mn(2+).

This sequence belongs to the peptidase M24B family. Mn(2+) is required as a cofactor.

The catalysed reaction is Release of any N-terminal amino acid, including proline, that is linked to proline, even from a dipeptide or tripeptide.. Catalyzes the removal of a penultimate prolyl residue from the N-termini of peptides. This is Probable Xaa-Pro aminopeptidase P (AMPP) from Verticillium alfalfae (strain VaMs.102 / ATCC MYA-4576 / FGSC 10136) (Verticillium wilt of alfalfa).